Reading from the N-terminus, the 127-residue chain is uncharacterized protein (127 aa).

An N-terminal signal peptide occupies residues 1–23 (MSKPLKFLLWSSLALLLLQIGSG).

This is an uncharacterized protein from Arabidopsis thaliana (Mouse-ear cress).